An 852-amino-acid chain; its full sequence is Taste receptor type 1 member 3 (852 aa).

An N-terminal signal peptide occupies residues 1 to 20 (MLGPAVLGLSLWALLQPGAG). Over 21-570 (APLCLSQQLR…FLAWGEPAVL (550 aa)) the chain is Extracellular. N-linked (GlcNAc...) asparagine glycosylation is found at N85, N130, N264, N285, N380, N411, N432, and N475. The chain crosses the membrane as a helical span at residues 571–591 (LLLLLLSLALGLVLAALGLFV). The Cytoplasmic portion of the chain corresponds to 592–603 (HHRDSPLVQASG). The chain crosses the membrane as a helical span at residues 604-624 (GPLACFGLVCLGLVCLSVLLF). Residues 625–639 (PGQPSPAQCLAQQPL) lie on the Extracellular side of the membrane. A helical transmembrane segment spans residues 640-660 (SHLPLTGCLSTLFLQAAEIFV). Residues 661-682 (ESELPLSWADRLSGCLRGPWAW) are Cytoplasmic-facing. A helical transmembrane segment spans residues 683–703 (LVVLLAMLVEVALCTWYLVAF). Over 704-729 (PPEVVTDWHMLPTEALVHCRTRSWVS) the chain is Extracellular. The chain crosses the membrane as a helical span at residues 730–750 (FGLAHATNATLAFLCFLGTFL). Topologically, residues 751 to 762 (VRSQPGRYNRAR) are cytoplasmic. Residues 763 to 783 (GLTFAMLAYFITWVSFVPLLA) traverse the membrane as a helical segment. Over 784 to 791 (NVQVVLRP) the chain is Extracellular. The chain crosses the membrane as a helical span at residues 792–812 (AVQMGALLLCVLGILAAFHLP). The Cytoplasmic segment spans residues 813–852 (RCYLLIRQPGLNTPEFFLGGGPGDAQGRNDGDTGNQGKHE). The tract at residues 833 to 852 (GPGDAQGRNDGDTGNQGKHE) is disordered. The segment covering 839–852 (GRNDGDTGNQGKHE) has biased composition (basic and acidic residues).

The protein belongs to the G-protein coupled receptor 3 family. TAS1R subfamily. Forms homodimers or heterodimers with TAS1R1 and TAS1R2.

The protein localises to the cell membrane. In terms of biological role, putative taste receptor. TAS1R1/TAS1R3 responds to the umami taste stimulus (the taste of monosodium glutamate). TAS1R2/TAS1R3 recognizes diverse natural and synthetic sweeteners. TAS1R3 is essential for the recognition and response to the disaccharide trehalose. Sequence differences within and between species can significantly influence the selectivity and specificity of taste responses. The polypeptide is Taste receptor type 1 member 3 (TAS1R3) (Gorilla gorilla gorilla (Western lowland gorilla)).